The primary structure comprises 427 residues: MLDLKLLQNNPEVVAEALAKRNSGIDITLFTALDQRRRELLLEVEALKSERNKASGDVARMKRAGENADALIEKLGALSDRIKTLDAETETVKAEVHQWLISLPNIPHESVPAGADENDNVFLHAWGEKPSFDFTPKEHWEIGPALGLDFERGSRLTGSRFTVLWHWAAKLERALTAFFLDVHTREHGYMEVYPPAMVNAQTMTGTGQLPKFEEDLFKLRDSEYYLIPTAEVPLTNLHSGEVVPEEKLPIAYTAQTQCFRSEAGSYGKDTKGFIRQHQFTKVEMVRFAHPEKSFEELEKLRSHAEVLLQKLGLHYRVVTLCSGDMGFSAAKTYDLEVWLPGQDKYREISSCSNCTDFQARRANIRTRLADAKKPVFLHTLNGSGLAVGRTLVAILENYQQADGSVVVPEVLRPYMGGVALLTPDGPF.

229–231 (TAE) contributes to the L-serine binding site. Residue 260–262 (RSE) coordinates ATP. E283 is an L-serine binding site. 347 to 350 (EISS) is an ATP binding site. Position 383 (S383) interacts with L-serine.

The protein belongs to the class-II aminoacyl-tRNA synthetase family. Type-1 seryl-tRNA synthetase subfamily. As to quaternary structure, homodimer. The tRNA molecule binds across the dimer.

Its subcellular location is the cytoplasm. It catalyses the reaction tRNA(Ser) + L-serine + ATP = L-seryl-tRNA(Ser) + AMP + diphosphate + H(+). The catalysed reaction is tRNA(Sec) + L-serine + ATP = L-seryl-tRNA(Sec) + AMP + diphosphate + H(+). It participates in aminoacyl-tRNA biosynthesis; selenocysteinyl-tRNA(Sec) biosynthesis; L-seryl-tRNA(Sec) from L-serine and tRNA(Sec): step 1/1. Functionally, catalyzes the attachment of serine to tRNA(Ser). Is also able to aminoacylate tRNA(Sec) with serine, to form the misacylated tRNA L-seryl-tRNA(Sec), which will be further converted into selenocysteinyl-tRNA(Sec). The chain is Serine--tRNA ligase from Oleidesulfovibrio alaskensis (strain ATCC BAA-1058 / DSM 17464 / G20) (Desulfovibrio alaskensis).